The chain runs to 129 residues: Large ribosomal subunit protein bL12 (129 aa).

It belongs to the bacterial ribosomal protein bL12 family. Homodimer. Part of the ribosomal stalk of the 50S ribosomal subunit. Forms a multimeric L10(L12)X complex, where L10 forms an elongated spine to which 2 to 4 L12 dimers bind in a sequential fashion. Binds GTP-bound translation factors.

Functionally, forms part of the ribosomal stalk which helps the ribosome interact with GTP-bound translation factors. Is thus essential for accurate translation. This is Large ribosomal subunit protein bL12 from Treponema denticola (strain ATCC 35405 / DSM 14222 / CIP 103919 / JCM 8153 / KCTC 15104).